The sequence spans 153 residues: Endoribonuclease YbeY (153 aa).

Zn(2+)-binding residues include His114, His118, and His124.

Belongs to the endoribonuclease YbeY family. Zn(2+) serves as cofactor.

It localises to the cytoplasm. Its function is as follows. Single strand-specific metallo-endoribonuclease involved in late-stage 70S ribosome quality control and in maturation of the 3' terminus of the 16S rRNA. This Shewanella sp. (strain MR-4) protein is Endoribonuclease YbeY.